A 966-amino-acid chain; its full sequence is Mitogen-activated protein kinase kinase kinase 13 (966 aa).

A disordered region spans residues 1–59; sequence MANPQEHLSCSSSPRLPLSENKTFNGLQDDLAPMGSHASPKLLKDQQEKGMVQTELAEG. Low complexity predominate over residues 8–19; the sequence is LSCSSSPRLPLS. The Protein kinase domain maps to 168–409; it reads ISELQWLGSG…FRQTLMHLDI (242 aa). ATP contacts are provided by residues 174 to 182 and Lys-195; that span reads LGSGAQGAV. The active-site Proton acceptor is Asp-279. Leucine-zipper regions lie at residues 433 to 454 and 486 to 507; these read VKKH…DEEL and LSAI…EQAV. Residues 457-496 adopt a coiled-coil conformation; the sequence is RRREELRHALDIREHYERKLERANNLYMELSAIMLQLEMR. 3 disordered regions span residues 561–663, 743–874, and 937–966; these read EVAP…GQDI, LDVP…DELA, and QFEE…SATW. The segment covering 567-581 has biased composition (low complexity); it reads SPLSGSPKLSSSSSK. The segment covering 582 to 594 has biased composition (basic residues); that stretch reads SRYRSKPRHRRGN. The segment covering 609–622 has biased composition (polar residues); that stretch reads QPAQEDSPHPTSLH. Low complexity predominate over residues 629–642; it reads PSSQHHNLLQQQYQ. Residues 814–827 are compositionally biased toward acidic residues; the sequence is DSSEEEEGEVDSEV. An acidic region spans residues 815 to 828; sequence SSEEEEGEVDSEVE. The span at 840–855 shows a compositional bias: polar residues; it reads SSCQSYSTFSSENFSV. Residues 939 to 950 are compositionally biased toward acidic residues; sequence EESDCDSSDGEC. The segment covering 954–966 has biased composition (polar residues); that stretch reads TVRTNKHYSSATW.

Belongs to the protein kinase superfamily. Ser/Thr protein kinase family. In terms of assembly, homodimer; forms dimers through the leucine-zipper motif. Interacts with the C-terminus of MAPK8IP1 through the kinase catalytic domain. Binds PRDX3. Associates with the IKK complex through the kinase domain. It depends on Mg(2+) as a cofactor. Post-translationally, autophosphorylated on serine and threonine residues.

It is found in the cytoplasm. The protein resides in the membrane. The enzyme catalyses L-seryl-[protein] + ATP = O-phospho-L-seryl-[protein] + ADP + H(+). The catalysed reaction is L-threonyl-[protein] + ATP = O-phospho-L-threonyl-[protein] + ADP + H(+). Activated by autophosphorylation and homodimerization. Functionally, activates the JUN N-terminal pathway through activation of the MAP kinase kinase MAP2K7. Acts synergistically with PRDX3 to regulate the activation of NF-kappa-B in the cytosol. This activation is kinase-dependent and involves activating the IKK complex, the IKBKB-containing complex that phosphorylates inhibitors of NF-kappa-B. The polypeptide is Mitogen-activated protein kinase kinase kinase 13 (MAP3K13) (Bos taurus (Bovine)).